The chain runs to 394 residues: Penicillopepsin-3 (394 aa).

An N-terminal signal peptide occupies residues 1–20 (MVSFTQLQLAFLGLSALGAA). Positions 21 to 70 (VPVTGTSEKKTFSLNQVKVAGTKTKNPAEHYANALRKYGAEVPSHVLAAA) are cleaved as a propeptide — activation peptide. The 306-residue stretch at 87–392 (YLTPIDVGGT…DASGPRLGFA (306 aa)) folds into the Peptidase A1 domain. Active-site residues include aspartate 103 and aspartate 284. A disulfide bridge connects residues cysteine 320 and cysteine 355.

Belongs to the peptidase A1 family. In terms of assembly, monomer.

It localises to the secreted. It catalyses the reaction Hydrolysis of proteins with broad specificity similar to that of pepsin A, preferring hydrophobic residues at P1 and P1', but also cleaving 20-Gly-|-Glu-21 in the B chain of insulin. Clots milk, and activates trypsinogen.. Secreted aspartic endopeptidase that allows assimilation of proteinaceous substrates. The scissile peptide bond is attacked by a nucleophilic water molecule activated by two aspartic residues in the active site. Shows a broad primary substrate specificity. Favors hydrophobic residues at the P1 and P1' positions, but can also activate trypsinogen and hydrolyze the B chain of insulin between positions 'Gly-20' and 'Glu-21'. This is Penicillopepsin-3 from Penicillium janthinellum (Penicillium vitale).